The following is a 96-amino-acid chain: Acetolactate synthase isozyme 1 small subunit (96 aa).

Residues 10–83 form the ACT domain; it reads ILELTVRNHP…DVVKVQRNQS (74 aa).

Belongs to the acetolactate synthase small subunit family. As to quaternary structure, dimer of large and small chains.

The enzyme catalyses 2 pyruvate + H(+) = (2S)-2-acetolactate + CO2. Its pathway is amino-acid biosynthesis; L-isoleucine biosynthesis; L-isoleucine from 2-oxobutanoate: step 1/4. It functions in the pathway amino-acid biosynthesis; L-valine biosynthesis; L-valine from pyruvate: step 1/4. The protein is Acetolactate synthase isozyme 1 small subunit (ilvN) of Escherichia coli O157:H7.